The sequence spans 290 residues: uncharacterized protein (290 aa).

It belongs to the glycosyltransferase 2 family.

This is an uncharacterized protein from Methanocaldococcus jannaschii (strain ATCC 43067 / DSM 2661 / JAL-1 / JCM 10045 / NBRC 100440) (Methanococcus jannaschii).